Reading from the N-terminus, the 67-residue chain is Epsilon-conotoxin TxVA (67 aa).

A signal peptide spans 1-19 (MRCFPVFIILLLLIASAPC). A propeptide spanning residues 20–50 (FDARTKTDDDVPLSSLRDNLKRTIRTRLNIR) is cleaved from the precursor. 4-carboxyglutamate is present on residues glutamate 51 and glutamate 54. Intrachain disulfides connect cysteine 52–cysteine 58 and cysteine 53–cysteine 59. Tryptophan 57 is modified (6'-bromotryptophan). Threonine 60 carries an O-linked (GalNAc...) threonine glycan. A 4-hydroxyproline modification is found at proline 63. Positions 64-67 (LTGR) are excised as a propeptide.

O-glycan consists of the disaccharide Gal-GalNAc. Expressed by the venom duct.

The protein localises to the secreted. Its function is as follows. Epsilon-conotoxins act at presynaptic membranes, blocking the calcium channels or G protein-coupled receptors. Causes hyperactivity upon intracranial injection into mice. Causes dorsal fins drooping in fish. In Conus textile (Cloth-of-gold cone), this protein is Epsilon-conotoxin TxVA.